Consider the following 268-residue polypeptide: Fatty acid elongase sre1 (268 aa).

The next 7 membrane-spanning stretches (helical) occupy residues valine 31–methionine 51, phenylalanine 62–methionine 82, isoleucine 110–isoleucine 130, proline 137–leucine 157, tryptophan 161–tyrosine 181, isoleucine 198–valine 218, and alanine 227–glycine 247.

The protein belongs to the ELO family.

The protein resides in the membrane. The catalysed reaction is a very-long-chain acyl-CoA + malonyl-CoA + H(+) = a very-long-chain 3-oxoacyl-CoA + CO2 + CoA. Its function is as follows. Could be implicated in synthesis of very long chain fatty acids. The protein is Fatty acid elongase sre1 (sre1) of Dictyostelium discoideum (Social amoeba).